Consider the following 257-residue polypeptide: Diphthine synthase (257 aa).

S-adenosyl-L-methionine contacts are provided by residues leucine 9, aspartate 86, valine 89, 114 to 115 (SI), leucine 166, alanine 207, and histidine 232.

It belongs to the diphthine synthase family. As to quaternary structure, homodimer.

The enzyme catalyses 2-[(3S)-amino-3-carboxypropyl]-L-histidyl-[translation elongation factor 2] + 3 S-adenosyl-L-methionine = diphthine-[translation elongation factor 2] + 3 S-adenosyl-L-homocysteine + 3 H(+). Its pathway is protein modification; peptidyl-diphthamide biosynthesis. Functionally, S-adenosyl-L-methionine-dependent methyltransferase that catalyzes the trimethylation of the amino group of the modified target histidine residue in translation elongation factor 2 (EF-2), to form an intermediate called diphthine. The three successive methylation reactions represent the second step of diphthamide biosynthesis. The sequence is that of Diphthine synthase from Methanocella arvoryzae (strain DSM 22066 / NBRC 105507 / MRE50).